A 473-amino-acid chain; its full sequence is tRNA modification GTPase MnmE (473 aa).

(6S)-5-formyl-5,6,7,8-tetrahydrofolate-binding residues include Arg-30, Glu-95, and Arg-134. Residues 230 to 394 (GVAAVIAGRP…LKSTMAGMVE (165 aa)) enclose the TrmE-type G domain. Residues 240–245 (NAGKST), 259–265 (SHMPGTT), and 284–287 (DTAG) contribute to the GTP site. Mg(2+)-binding residues include Ser-244 and Thr-265. Lys-473 serves as a coordination point for (6S)-5-formyl-5,6,7,8-tetrahydrofolate.

It belongs to the TRAFAC class TrmE-Era-EngA-EngB-Septin-like GTPase superfamily. TrmE GTPase family. In terms of assembly, homodimer. Heterotetramer of two MnmE and two MnmG subunits. Requires K(+) as cofactor.

The protein localises to the cytoplasm. Its function is as follows. Exhibits a very high intrinsic GTPase hydrolysis rate. Involved in the addition of a carboxymethylaminomethyl (cmnm) group at the wobble position (U34) of certain tRNAs, forming tRNA-cmnm(5)s(2)U34. This chain is tRNA modification GTPase MnmE, found in Chlorobium phaeovibrioides (strain DSM 265 / 1930) (Prosthecochloris vibrioformis (strain DSM 265)).